Here is a 355-residue protein sequence, read N- to C-terminus: Poly(3-hydroxyalkanoate) polymerase subunit PhaC (355 aa).

Residues 68-333 (PLLIVYALVN…LAFPGGHIGI (266 aa)) enclose the AB hydrolase-1 domain. Cys-148 is a catalytic residue.

It belongs to the PHA/PHB synthase family. Type III PhaC subfamily. In terms of assembly, forms a heterodimer with PhaE, which may multimerize in the presence of 3-hydroxybutyryl-CoA.

The protein localises to the cytoplasm. It catalyses the reaction (3R)-3-hydroxybutanoyl-CoA + [(3R)-hydroxybutanoate](n) = [(3R)-hydroxybutanoate](n+1) + CoA. Its pathway is biopolymer metabolism; poly-(R)-3-hydroxybutanoate biosynthesis. Polymerizes D(-)-3-hydroxybutyryl-CoA to create PHB which consists of thousands of hydroxybutyrate molecules linked end to end. PHB serves as an intracellular energy reserve material when cells grow under conditions of nutrient limitation. This is Poly(3-hydroxyalkanoate) polymerase subunit PhaC from Thiocystis violacea.